A 162-amino-acid chain; its full sequence is 2-C-methyl-D-erythritol 2,4-cyclodiphosphate synthase (162 aa).

The a divalent metal cation site is built by Asp-12 and His-14. 4-CDP-2-C-methyl-D-erythritol 2-phosphate contacts are provided by residues 12–14 and 38–39; these read DVH and HS. Residue His-46 coordinates a divalent metal cation. 4-CDP-2-C-methyl-D-erythritol 2-phosphate contacts are provided by residues 60-62, 65-69, Phe-143, and Arg-146; these read DIG and FPDTD.

This sequence belongs to the IspF family. In terms of assembly, homotrimer. A divalent metal cation serves as cofactor.

The catalysed reaction is 4-CDP-2-C-methyl-D-erythritol 2-phosphate = 2-C-methyl-D-erythritol 2,4-cyclic diphosphate + CMP. The protein operates within isoprenoid biosynthesis; isopentenyl diphosphate biosynthesis via DXP pathway; isopentenyl diphosphate from 1-deoxy-D-xylulose 5-phosphate: step 4/6. Its function is as follows. Involved in the biosynthesis of isopentenyl diphosphate (IPP) and dimethylallyl diphosphate (DMAPP), two major building blocks of isoprenoid compounds. Catalyzes the conversion of 4-diphosphocytidyl-2-C-methyl-D-erythritol 2-phosphate (CDP-ME2P) to 2-C-methyl-D-erythritol 2,4-cyclodiphosphate (ME-CPP) with a corresponding release of cytidine 5-monophosphate (CMP). The polypeptide is 2-C-methyl-D-erythritol 2,4-cyclodiphosphate synthase (Azoarcus sp. (strain BH72)).